A 112-amino-acid chain; its full sequence is Putative acyl carrier protein, mitochondrial (112 aa).

Residues M1–Y28 constitute a mitochondrion transit peptide. One can recognise a Carrier domain in the interval P33–P109. At S69 the chain carries O-(pantetheine 4'-phosphoryl)serine.

It belongs to the acyl carrier protein (ACP) family. 4'-phosphopantetheine is transferred from CoA to a specific serine of apo-ACP by acpS. This modification is essential for activity because fatty acids are bound in thioester linkage to the sulfhydryl of the prosthetic group.

It localises to the mitochondrion. It functions in the pathway lipid metabolism; fatty acid biosynthesis. Functionally, carrier of the growing fatty acid chain in fatty acid biosynthesis. May be involved in the synthesis of very-long-chain fatty acids. In Schizosaccharomyces pombe (strain 972 / ATCC 24843) (Fission yeast), this protein is Putative acyl carrier protein, mitochondrial.